We begin with the raw amino-acid sequence, 317 residues long: Olfactory receptor 5K16 (317 aa).

Residues 1–28 (MEKTNHSLTTQFILVGFSDHPDLKTPLF) are Extracellular-facing. N-linked (GlcNAc...) asparagine glycosylation occurs at Asn5. The chain crosses the membrane as a helical span at residues 29 to 49 (LLFSVIYLVTMVGNLGLVAVI). The Cytoplasmic portion of the chain corresponds to 50–56 (YLEPRLH). The chain crosses the membrane as a helical span at residues 57–77 (TPMYIFLGNLALMDSCCSCAI). Over 78–93 (TPKILENFFSVDRRIS) the chain is Extracellular. The helical transmembrane segment at 94-114 (LYECMAQFYFLCLAETADCFL) threads the bilayer. A disulfide bond links Cys97 and Cys189. At 115–144 (LAAMAYDRYVAICNPLQYHSMMSKKLSIQM) the chain is on the cytoplasmic side. The helical transmembrane segment at 145-165 (SIGTFITSNLHSLIHVGCLLR) threads the bilayer. Residues 166 to 198 (LTFCKSNRIDHFFCDILPLYRLSCTDPFINELM) are Extracellular-facing. A helical transmembrane segment spans residues 199–219 (IYIFSMPIQVFTITTVLVSYF). At 220 to 239 (CILLTIFKMKSKDGRGKAFS) the chain is on the cytoplasmic side. Residues 240-259 (TCASHFFSVSIFYVCLLMYI) traverse the membrane as a helical segment. The Extracellular portion of the chain corresponds to 260 to 268 (RPFDEGNKD). A helical transmembrane segment spans residues 269–289 (IPVAVFYTIIIPLLNPFIYSL). At 290–317 (RNKEVVNAVKKVMKTHSIFKNASASMAR) the chain is on the cytoplasmic side.

This sequence belongs to the G-protein coupled receptor 1 family.

It localises to the cell membrane. Functionally, potential odorant receptor. The sequence is that of Olfactory receptor 5K16 from Mus musculus (Mouse).